A 545-amino-acid chain; its full sequence is ATP synthase subunit alpha (545 aa).

172–179 (GDRKTGKT) serves as a coordination point for ATP.

Belongs to the ATPase alpha/beta chains family. F-type ATPases have 2 components, CF(1) - the catalytic core - and CF(0) - the membrane proton channel. CF(1) has five subunits: alpha(3), beta(3), gamma(1), delta(1), epsilon(1). CF(0) has three main subunits: a(1), b(2) and c(9-12). The alpha and beta chains form an alternating ring which encloses part of the gamma chain. CF(1) is attached to CF(0) by a central stalk formed by the gamma and epsilon chains, while a peripheral stalk is formed by the delta and b chains.

The protein localises to the cell membrane. It carries out the reaction ATP + H2O + 4 H(+)(in) = ADP + phosphate + 5 H(+)(out). In terms of biological role, produces ATP from ADP in the presence of a proton gradient across the membrane. The alpha chain is a regulatory subunit. The sequence is that of ATP synthase subunit alpha from Corynebacterium urealyticum (strain ATCC 43042 / DSM 7109).